The primary structure comprises 283 residues: MAGTNKSYFHLHMISDSTGETLIMVARAVAAQYANVTPVEHVYPLVRSQKQLDRVLAEIEEAPGIVLFTLLEKDLVERVEATCKDMNIPSLSIIGPVMELFRAYLGRETSPRVGAQHTLNAEYFNRIDALNYTMMHDDGQHVEGLEEADVVLVGVSRTSKTPTSIYLANRGIRTANVPLVPGIPIPPQLETLKKPLVVSLHATPERLVQVRQNRLLGIGAGAPLPGRGEDSYIDSRSVAEEVAFARKLSAKYDWPLLDVTRRSIEETAAAVMKLYADRQRQHG.

Residue 154–161 (GVSRTSKT) participates in ADP binding.

It belongs to the pyruvate, phosphate/water dikinase regulatory protein family. PDRP subfamily.

It catalyses the reaction N(tele)-phospho-L-histidyl/L-threonyl-[pyruvate, phosphate dikinase] + ADP = N(tele)-phospho-L-histidyl/O-phospho-L-threonyl-[pyruvate, phosphate dikinase] + AMP + H(+). The catalysed reaction is N(tele)-phospho-L-histidyl/O-phospho-L-threonyl-[pyruvate, phosphate dikinase] + phosphate + H(+) = N(tele)-phospho-L-histidyl/L-threonyl-[pyruvate, phosphate dikinase] + diphosphate. In terms of biological role, bifunctional serine/threonine kinase and phosphorylase involved in the regulation of the pyruvate, phosphate dikinase (PPDK) by catalyzing its phosphorylation/dephosphorylation. This chain is Putative pyruvate, phosphate dikinase regulatory protein, found in Afipia carboxidovorans (strain ATCC 49405 / DSM 1227 / KCTC 32145 / OM5) (Oligotropha carboxidovorans).